Reading from the N-terminus, the 262-residue chain is uncharacterized protein (262 aa).

Positions 6–70 (LRINQFLAHY…LKNKKFSVLV (65 aa)) constitute an S4 RNA-binding domain. The Nucleophile role is filled by Asp-108.

The protein belongs to the pseudouridine synthase RsuA family.

The catalysed reaction is a uridine in RNA = a pseudouridine in RNA. This is an uncharacterized protein from Helicobacter pylori (strain J99 / ATCC 700824) (Campylobacter pylori J99).